Consider the following 539-residue polypeptide: Polyol transporter 5 (539 aa).

Polar residues predominate over residues 1 to 11 (MTGATPENRTA). A disordered region spans residues 1–24 (MTGATPENRTAPSPPPVKHVPESV). 12 helical membrane passes run 37 to 57 (FACAILASMTSILLGYDIGVM), 73 to 93 (LQIGILAGSLNIYSLIGSCAA), 104 to 124 (YTIVLAGAIFFAGAILMGLSP), 127 to 147 (AFLMFGRFIAGIGVGYALMIA), 165 to 185 (SFPEVFINAGIMLGYVSNLAF), 196 to 216 (LMLGIGAVPSVILAIGVLAMP), 296 to 316 (IAAIGIHFFQQASGIDAVVLF), 333 to 353 (LLATVAVGVVKTSFILVATFL), 364 to 384 (LTSVGGMVLSLAALGTSLTII), 391 to 411 (VMWAVVVAIATVMTYVATFSI), 433 to 453 (GSSMGVVVNRVTSGVISISFL), and 463 to 483 (GAFYLFGGIATVAWVFFYTFL). 2 stretches are compositionally biased toward basic and acidic residues: residues 503 to 514 (WRDSKSKPKGNP) and 530 to 539 (QWKEGDTQSS). The tract at residues 503-539 (WRDSKSKPKGNPEKTVPNPEVEIGSNKQWKEGDTQSS) is disordered.

The protein belongs to the major facilitator superfamily. Sugar transporter (TC 2.A.1.1) family. In terms of tissue distribution, highly expressed in roots. Expressed in vascular tissue of leaves, sepals and siliques.

It is found in the cell membrane. Plasma membrane broad-spectrum sugar-proton symporter. Mediates the uptake of linear polyols such as sorbitol, xylitol, erythritol or glycerol. Can transport the cyclic polyol myo-inositol and different hexoses, pentoses (including ribose), tetroses and sugar alcohols. The polypeptide is Polyol transporter 5 (PLT5) (Arabidopsis thaliana (Mouse-ear cress)).